The primary structure comprises 333 residues: Anthranilate phosphoribosyltransferase (333 aa).

Residues Gly-81, 84-85 (GD), Thr-89, 91-94 (NIST), 109-117 (KHGNRSVSS), and Ala-121 each bind 5-phospho-alpha-D-ribose 1-diphosphate. Gly-81 is a binding site for anthranilate. Position 93 (Ser-93) interacts with Mg(2+). Asn-112 contacts anthranilate. Arg-167 serves as a coordination point for anthranilate. Residues Asp-225 and Glu-226 each contribute to the Mg(2+) site.

It belongs to the anthranilate phosphoribosyltransferase family. Homodimer. Requires Mg(2+) as cofactor.

The enzyme catalyses N-(5-phospho-beta-D-ribosyl)anthranilate + diphosphate = 5-phospho-alpha-D-ribose 1-diphosphate + anthranilate. It participates in amino-acid biosynthesis; L-tryptophan biosynthesis; L-tryptophan from chorismate: step 2/5. Catalyzes the transfer of the phosphoribosyl group of 5-phosphorylribose-1-pyrophosphate (PRPP) to anthranilate to yield N-(5'-phosphoribosyl)-anthranilate (PRA). The polypeptide is Anthranilate phosphoribosyltransferase (Haemophilus influenzae (strain PittEE)).